An 829-amino-acid chain; its full sequence is Receptor-type tyrosine-protein phosphatase alpha (829 aa).

Positions 1 to 19 (MDSWFILVLFGSGLIHVSA) are cleaved as a signal peptide. Topologically, residues 20–142 (NNATTVSPSL…ETFPPADETP (123 aa)) are extracellular. N-linked (GlcNAc...) asparagine glycans are attached at residues Asn21, Asn47, Asn51, Asn68, Asn80, Asn86, Asn104, and Asn124. A disordered region spans residues 79–106 (VNSSHSDNGTRRAASTESGGTTISPNGS). Residues 143-166 (IIAVMVALSSLLVIVFIIIVLYML) form a helical membrane-spanning segment. Residues 167-829 (RFKKYKQAGS…DAFSDYANFK (663 aa)) are Cytoplasmic-facing. Phosphoserine occurs at positions 202 and 204. Tyrosine-protein phosphatase domains are found at residues 232-528 (FREE…LLEH) and 560-818 (LEEE…VQEY). Residues Asp437, 469–475 (CSAGVGR), and Gln513 each bind substrate. Residue Cys469 is the Phosphocysteine intermediate of the active site. Cys759 (phosphocysteine intermediate) is an active-site residue. At Tyr825 the chain carries Phosphotyrosine.

Belongs to the protein-tyrosine phosphatase family. Receptor class 4 subfamily. Part of a complex comprised of PTPRA, BCAR1, BCAR3 (via SH2 domain), and SRC. Within the complex, interacts (when phosphorylated on Tyr-825) with BCAR3 (via SH2 domain). Interacts with GRB2. Integrin binding to extracellular matrix induces phosphorylation at Tyr-825 which induces PTPRA localization and recruitment of BCAR3, BCAR1 and CRK to focal adhesions. Widely expressed. Highest expression in brain and kidney.

The protein resides in the cell membrane. It localises to the cell junction. Its subcellular location is the focal adhesion. The catalysed reaction is O-phospho-L-tyrosyl-[protein] + H2O = L-tyrosyl-[protein] + phosphate. Its function is as follows. Tyrosine protein phosphatase which is involved in integrin-mediated focal adhesion formation. Following integrin engagement, specifically recruits BCAR3, BCAR1 and CRK to focal adhesions thereby promoting SRC-mediated phosphorylation of BRAC1 and the subsequent activation of PAK and small GTPase RAC1 and CDC42. This chain is Receptor-type tyrosine-protein phosphatase alpha (Ptpra), found in Mus musculus (Mouse).